Consider the following 240-residue polypeptide: MSAKPIYKRVLLKASGEALMGSQGFGIDVAVADRIASDIAEARAMGVEVGVVVGGGNIFRGVAVASKGGDRVTGDHMGMLATVINALALATSLRKLDIDTVVLSAIAMPEICESFSQRATLYHLSLGRVVIFAGGTGNPFFTTDSAAALRAAEMGAEAIFKGTQVDGIYSADPKKDPSATRFDRLTHSEILEKGLAVMDVAAVALARENAIPIVVFSIHEKGGFTEILTGGGRATIVTDN.

An ATP-binding site is contributed by 13-16 (KASG). Residues 21-26 (GSQGFG) form an involved in allosteric activation by GTP region. Glycine 55 is a UMP binding site. Positions 56 and 60 each coordinate ATP. Residues aspartate 75 and 136–143 (TGNPFFTT) each bind UMP. Threonine 163, glutamine 164, tyrosine 169, and aspartate 172 together coordinate ATP.

This sequence belongs to the UMP kinase family. In terms of assembly, homohexamer.

Its subcellular location is the cytoplasm. It catalyses the reaction UMP + ATP = UDP + ADP. Its pathway is pyrimidine metabolism; CTP biosynthesis via de novo pathway; UDP from UMP (UMPK route): step 1/1. Allosterically activated by GTP. Inhibited by UTP. Functionally, catalyzes the reversible phosphorylation of UMP to UDP. In Rhizobium meliloti (strain 1021) (Ensifer meliloti), this protein is Uridylate kinase.